We begin with the raw amino-acid sequence, 739 residues long: G2 and S phase-expressed protein 1 (739 aa).

The span at 1–11 shows a compositional bias: basic and acidic residues; the sequence is MEGGGGRDEPS. The disordered stretch occupies residues 1 to 20; the sequence is MEGGGGRDEPSACRAGDVNM. Position 91 is a phosphoserine (Ser91). Disordered regions lie at residues 116–136, 149–306, and 320–639; these read SRNQAAQAAKPEDPRSQGVER, EKEK…AIPV, and PGST…GDAA. Positions 149-165 are enriched in basic and acidic residues; that stretch reads EKEKEMKKSPTSLKRET. Ser157 carries the post-translational modification Phosphoserine. A Phosphothreonine modification is found at Thr159. A phosphoserine mark is found at Ser171, Ser187, Ser208, Ser247, and Ser262. A compositionally biased stretch (low complexity) spans 181–195; sequence PRLLASSPALPSSGA. Positions 268-280 are enriched in basic and acidic residues; sequence IPAEKESHRDVLP. Composition is skewed to low complexity over residues 284–294 and 330–342; these read APGAVNVPAAG and SSSGPVWSGASSA. Position 331 is a phosphoserine (Ser331). Over residues 360–372 the composition is skewed to polar residues; the sequence is PANSSRPLSNISK. The span at 411 to 424 shows a compositional bias: low complexity; it reads TAPPSASPTQPQTP. Composition is skewed to polar residues over residues 430-446 and 455-470; these read WLNSSCAWSESSQLNKT and CLNSKTKVMPTPTNQF. Ser480 carries the phosphoserine modification. A compositionally biased stretch (polar residues) spans 481-522; it reads PDSSTPKLSRAQRPQSCTSVGRVTVHSTPVRRSSGPAPQSLL. Position 485 is a phosphothreonine (Thr485). Residues Ser496, Ser499, Ser514, Ser520, Ser523, and Ser528 each carry the phosphoserine modification. At Thr532 the chain carries Phosphothreonine. Phosphoserine occurs at positions 535 and 555. Positions 577 to 590 are enriched in basic and acidic residues; the sequence is EPTRESNRKTDSRL. Residues Ser594 and Ser611 each carry the phosphoserine modification. Residue Thr696 is modified to Phosphothreonine. Phosphoserine is present on residues Ser707, Ser717, Ser718, Ser724, and Ser734.

Phosphorylated in mitosis.

Its subcellular location is the cytoplasm. The protein resides in the cytoskeleton. Functionally, may be involved in p53-induced cell cycle arrest in G2/M phase by interfering with microtubule rearrangements that are required to enter mitosis. Overexpression delays G2/M phase progression. This is G2 and S phase-expressed protein 1 from Homo sapiens (Human).